Here is a 304-residue protein sequence, read N- to C-terminus: Dihydroorotate dehydrogenase B (NAD(+)), catalytic subunit (304 aa).

Residues Ser-22 and 46-47 contribute to the FMN site; that span reads KG. Substrate is bound by residues Lys-46 and 70 to 74; that span reads NSIGL. Positions 100 and 128 each coordinate FMN. A substrate-binding site is contributed by Asn-128. Cys-131 functions as the Nucleophile in the catalytic mechanism. FMN is bound by residues Lys-166 and Ile-192. Residue 193 to 194 coordinates substrate; it reads NT. FMN contacts are provided by residues Gly-218, 244–245, and 266–267; these read GG and GT.

The protein belongs to the dihydroorotate dehydrogenase family. Type 1 subfamily. Heterotetramer of 2 PyrK and 2 PyrD type B subunits. However, the metal reductase complex seems to be composed of a heterooctamer of 4 PyrK and 4 PyrD subunits. FMN is required as a cofactor.

The protein localises to the cytoplasm. The catalysed reaction is (S)-dihydroorotate + NAD(+) = orotate + NADH + H(+). It participates in pyrimidine metabolism; UMP biosynthesis via de novo pathway; orotate from (S)-dihydroorotate (NAD(+) route): step 1/1. Functionally, catalyzes the conversion of dihydroorotate to orotate with NAD(+) as electron acceptor. Its function is as follows. Together with PyrK, also forms a metal reductase complex able to reduce Fe(III)-chelates to Fe(II)-chelates, as well as soluble Cr(VI) and U(VI), using NADH as electron donor. To a lesser extent, can also use NADPH as an electron donor. Is unable to reduce riboflavin and FMN with NADH as electron donor. May have an in vivo role in metal reduction in D.reducens, which is an organism capable of reducing contaminant heavy metals and radionuclides. This chain is Dihydroorotate dehydrogenase B (NAD(+)), catalytic subunit (pyrD), found in Desulforamulus reducens (strain ATCC BAA-1160 / DSM 100696 / MI-1) (Desulfotomaculum reducens).